Consider the following 68-residue polypeptide: Large ribosomal subunit protein bL33c (68 aa).

This sequence belongs to the bacterial ribosomal protein bL33 family.

Its subcellular location is the plastid. It is found in the chloroplast. In Amborella trichopoda, this protein is Large ribosomal subunit protein bL33c.